Consider the following 276-residue polypeptide: Undecaprenyl-diphosphatase (276 aa).

A run of 8 helical transmembrane segments spans residues 1–21 (MELYQGVVLGVLQGLTEFLPV), 40–60 (ALSFDISVHLGTLFAVALVFF), 93–113 (VRLAALIIVGSIPTAVIGLIL), 120–140 (LFSSLVIVGSMLMVTGTFLWL), 154–174 (IGFGTALFIGVCQGVAVIPGI), 199–219 (FLLSMPAIAGAEILSLKESFA), 227–247 (VTLLSTLTAFIVGTLALVALL), and 255–275 (FYLFAPYCWVVGLISIIAGFV).

Belongs to the UppP family.

The protein localises to the cell inner membrane. It carries out the reaction di-trans,octa-cis-undecaprenyl diphosphate + H2O = di-trans,octa-cis-undecaprenyl phosphate + phosphate + H(+). In terms of biological role, catalyzes the dephosphorylation of undecaprenyl diphosphate (UPP). Confers resistance to bacitracin. The sequence is that of Undecaprenyl-diphosphatase from Desulforapulum autotrophicum (strain ATCC 43914 / DSM 3382 / VKM B-1955 / HRM2) (Desulfobacterium autotrophicum).